Consider the following 515-residue polypeptide: Probable cytosol aminopeptidase (515 aa).

Residues Lys-274 and Asp-279 each contribute to the Mn(2+) site. Lys-286 is a catalytic residue. Residues Asp-297, Asp-356, and Glu-358 each coordinate Mn(2+). The active site involves Arg-360.

This sequence belongs to the peptidase M17 family. The cofactor is Mn(2+).

The protein resides in the cytoplasm. The catalysed reaction is Release of an N-terminal amino acid, Xaa-|-Yaa-, in which Xaa is preferably Leu, but may be other amino acids including Pro although not Arg or Lys, and Yaa may be Pro. Amino acid amides and methyl esters are also readily hydrolyzed, but rates on arylamides are exceedingly low.. It carries out the reaction Release of an N-terminal amino acid, preferentially leucine, but not glutamic or aspartic acids.. Functionally, presumably involved in the processing and regular turnover of intracellular proteins. Catalyzes the removal of unsubstituted N-terminal amino acids from various peptides. In Desulforapulum autotrophicum (strain ATCC 43914 / DSM 3382 / VKM B-1955 / HRM2) (Desulfobacterium autotrophicum), this protein is Probable cytosol aminopeptidase.